The following is a 354-amino-acid chain: MSKYWSNITKNIEPYVCGEQPKNKKIIKLNTNENPYPPSPKVLQAIKNAARDDLRLYPDPNCDALRKTIANYYNLSKEEVFIGNGSDEILAFSFLTFFNPEETVVFSDISYSFYPVYANLYKLDYKLAKLREDFSIDINDFKNAKGGAVITNPNAPTGVYLSLDSVKQILEDNVNKVVIVDEAYIDFGGESSVSLIKDYPNLLVIQTLSKSRSLAGMRIGFALGQKELIKGLNRIKNSFNSYTIDRISSLAAIESIKDEEYFKECTSKVIKTRNWTINELGKIGFKVIPSKANFIFITYDTYEAKNIFVKLKDENVLVRYFNKYRISNYLRVSIGSKEEMVIFIDKIKEIINKL.

Lysine 210 carries the post-translational modification N6-(pyridoxal phosphate)lysine.

Belongs to the class-II pyridoxal-phosphate-dependent aminotransferase family. Histidinol-phosphate aminotransferase subfamily. In terms of assembly, homodimer. It depends on pyridoxal 5'-phosphate as a cofactor.

The catalysed reaction is L-histidinol phosphate + 2-oxoglutarate = 3-(imidazol-4-yl)-2-oxopropyl phosphate + L-glutamate. It participates in amino-acid biosynthesis; L-histidine biosynthesis; L-histidine from 5-phospho-alpha-D-ribose 1-diphosphate: step 7/9. The chain is Histidinol-phosphate aminotransferase from Clostridium botulinum (strain 657 / Type Ba4).